A 473-amino-acid chain; its full sequence is O-methyltransferase ARMGADRAFT_1088206 (473 aa).

S-adenosyl-L-methionine is bound by residues 276 to 277 (AG), Asp-299, 330 to 331 (DM), and Arg-348. Residue His-352 is the Proton acceptor of the active site.

Belongs to the class I-like SAM-binding methyltransferase superfamily. Cation-independent O-methyltransferase family.

Its pathway is secondary metabolite biosynthesis. Functionally, O-methyltransferase, part of the gene cluster that mediates the biosynthesis of melleolides, a range of antifungal and phytotoxic polyketide derivatives composed of an orsellinic acid (OA) moiety esterified to various sesquiterpene alcohols. The first step in melleolides biosynthesis is performed by the delta(6)-protoilludene synthase PRO1 which catalyzes the cyclization of farnesyl diphosphate to protoilludene. The orsellinic acid synthase armB produces OA by condensing acetyl-CoA with 3 malonyl-CoA units in a three-round chain elongation reaction folowed by a C2-C7 ring closure. ArmB further catalyzes the trans-esterification of OA to the various sesquiterpene alcohols resulting from the hydroxylation of protoilludene. The melleolides cluster also includes 5 cytochrome P450 monooxygenases, 4 NAD(+)-dependent oxidoreductases, one flavin-dependent oxidoreductase, and one O-methyltransferase. The cytochrome P450 monooxygenases may be involved in protoilludene hydroxylation to elaborate melleolides with multiple alcohol groups, such as melleolide D, which carries alcohol functionalities at C-4, C-5, C-10, and C-13. The role of the NAD(+)-dependent enzymes remains unknown. Numerous melleolides, including arnamial, show 5'-O-methylation of the aromatic moiety which may be catalyzed by the methyltransferase encoded in the cluster. The flavin-dependent oxidoreductase might represent the dehydrogenase yielding the aldehyde in position 1 of arnamial and other melleolides. Finally, several halogenase localized outside of the cluster, are able to catalyze the transfer of a single chlorine atom to the melleolide backbone, resulting in a 6'-chloromelleolide product. The protein is O-methyltransferase ARMGADRAFT_1088206 of Armillaria gallica (Bulbous honey fungus).